Reading from the N-terminus, the 390-residue chain is 3-ketoacyl-CoA thiolase (390 aa).

C95 (acyl-thioester intermediate) is an active-site residue. Residues H346 and C376 each act as proton acceptor in the active site.

This sequence belongs to the thiolase-like superfamily. Thiolase family. As to quaternary structure, heterotetramer of two alpha chains (FadB) and two beta chains (FadA).

It is found in the cytoplasm. The catalysed reaction is an acyl-CoA + acetyl-CoA = a 3-oxoacyl-CoA + CoA. It functions in the pathway lipid metabolism; fatty acid beta-oxidation. Catalyzes the final step of fatty acid oxidation in which acetyl-CoA is released and the CoA ester of a fatty acid two carbons shorter is formed. The polypeptide is 3-ketoacyl-CoA thiolase (Acinetobacter baumannii (strain ATCC 17978 / DSM 105126 / CIP 53.77 / LMG 1025 / NCDC KC755 / 5377)).